A 289-amino-acid polypeptide reads, in one-letter code: ATP phosphoribosyltransferase (289 aa).

The protein belongs to the ATP phosphoribosyltransferase family. Long subfamily. The cofactor is Mg(2+).

Its subcellular location is the cytoplasm. The enzyme catalyses 1-(5-phospho-beta-D-ribosyl)-ATP + diphosphate = 5-phospho-alpha-D-ribose 1-diphosphate + ATP. It participates in amino-acid biosynthesis; L-histidine biosynthesis; L-histidine from 5-phospho-alpha-D-ribose 1-diphosphate: step 1/9. With respect to regulation, feedback inhibited by histidine. Its function is as follows. Catalyzes the condensation of ATP and 5-phosphoribose 1-diphosphate to form N'-(5'-phosphoribosyl)-ATP (PR-ATP). Has a crucial role in the pathway because the rate of histidine biosynthesis seems to be controlled primarily by regulation of HisG enzymatic activity. The protein is ATP phosphoribosyltransferase of Methanosarcina acetivorans (strain ATCC 35395 / DSM 2834 / JCM 12185 / C2A).